The chain runs to 529 residues: Probable pectinesterase/pectinesterase inhibitor 35 (529 aa).

Residues 1–34 (MATTSFSLPNHKFGIKLMLFLVLNLLSLQTSVFA) form the signal peptide. Residues 36-180 (SSNSKFTKIS…TGLLTNSLDM (145 aa)) form a pectinesterase inhibitor 35 region. The interval 42 to 64 (TKISRHPNSDSSSRTKPSTSSNK) is disordered. Residues 50 to 64 (SDSSSRTKPSTSSNK) show a composition bias toward low complexity. N-linked (GlcNAc...) asparagine glycans are attached at residues Asn86, Asn169, and Asn193. Residues 228–514 (HAVVAADGSG…FTVSGFIDGN (287 aa)) form a pectinesterase 35 region. Substrate-binding residues include Thr302 and Gln332. Asp355 (proton donor; for pectinesterase activity) is an active-site residue. Residue Asp376 is the Nucleophile; for pectinesterase activity of the active site. Arg434 and Trp436 together coordinate substrate.

It in the N-terminal section; belongs to the PMEI family. The protein in the C-terminal section; belongs to the pectinesterase family. Expressed in siliques.

It localises to the secreted. Its subcellular location is the cell wall. It carries out the reaction [(1-&gt;4)-alpha-D-galacturonosyl methyl ester](n) + n H2O = [(1-&gt;4)-alpha-D-galacturonosyl](n) + n methanol + n H(+). Its pathway is glycan metabolism; pectin degradation; 2-dehydro-3-deoxy-D-gluconate from pectin: step 1/5. Functionally, acts in the modification of cell walls via demethylesterification of cell wall pectin. The protein is Probable pectinesterase/pectinesterase inhibitor 35 (PME35) of Arabidopsis thaliana (Mouse-ear cress).